The primary structure comprises 501 residues: Myrosinase MA1 (501 aa).

3 disulfide bridges follow: cysteine 6-cysteine 438, cysteine 14-cysteine 434, and cysteine 206-cysteine 214. Asparagine 21 carries N-linked (GlcNAc...) asparagine glycosylation. A substrate-binding site is contributed by glutamine 39. Histidine 56 is a Zn(2+) binding site. Asparagine 60 carries N-linked (GlcNAc...) asparagine glycosylation. Residue aspartate 70 participates in Zn(2+) binding. The N-linked (GlcNAc...) asparagine glycan is linked to asparagine 90. Residues histidine 141 and asparagine 186 each coordinate substrate. Glutamine 187 contributes to the L-ascorbate binding site. 2 N-linked (GlcNAc...) asparagine glycosylation sites follow: asparagine 218 and asparagine 244. Arginine 259 serves as a coordination point for L-ascorbate. N-linked (GlcNAc...) asparagine glycosylation is found at asparagine 265 and asparagine 292. Tyrosine 330 serves as a coordination point for substrate. Residues asparagine 343, asparagine 346, and asparagine 361 are each glycosylated (N-linked (GlcNAc...) asparagine). Residue glutamate 409 is the Nucleophile of the active site. Substrate-binding positions include tryptophan 457 and 464–465 (EF). Asparagine 482 carries an N-linked (GlcNAc...) asparagine glycan.

This sequence belongs to the glycosyl hydrolase 1 family. Homodimer. In vacuoles called myrosin grains of a certain class of cells, myrosin cells, distributed in the cotyledons and the axis of the embryo as well as in different organs of the growing plant.

The protein localises to the vacuole. The enzyme catalyses a thioglucoside + H2O = a sugar + a thiol.. Functionally, degradation of glucosinolates (glucose residue linked by a thioglucoside bound to an amino acid derivative) to glucose, sulfate and any of the products: thiocyanates, isothiocyanates, nitriles, epithionitriles or oxazolidine-2-thiones. This chain is Myrosinase MA1, found in Sinapis alba (White mustard).